The chain runs to 194 residues: Peptidyl-tRNA hydrolase (194 aa).

Tyr17 is a tRNA binding site. The active-site Proton acceptor is the His22. Residues Phe68, Asn70, and Asn116 each coordinate tRNA.

Belongs to the PTH family. In terms of assembly, monomer.

The protein localises to the cytoplasm. The catalysed reaction is an N-acyl-L-alpha-aminoacyl-tRNA + H2O = an N-acyl-L-amino acid + a tRNA + H(+). Functionally, hydrolyzes ribosome-free peptidyl-tRNAs (with 1 or more amino acids incorporated), which drop off the ribosome during protein synthesis, or as a result of ribosome stalling. Its function is as follows. Catalyzes the release of premature peptidyl moieties from peptidyl-tRNA molecules trapped in stalled 50S ribosomal subunits, and thus maintains levels of free tRNAs and 50S ribosomes. This is Peptidyl-tRNA hydrolase from Haemophilus influenzae (strain PittGG).